The following is a 513-amino-acid chain: Probable helicase MJ1565 (513 aa).

Residues arginine 151, 160–165, and 467–468 contribute to the ATP site; these read GMGKSN and KV.

The protein belongs to the HerA family.

It catalyses the reaction Couples ATP hydrolysis with the unwinding of duplex DNA at the replication fork by translocating in the 5'-3' direction. This creates two antiparallel DNA single strands (ssDNA). The leading ssDNA polymer is the template for DNA polymerase III holoenzyme which synthesizes a continuous strand.. The catalysed reaction is ATP + H2O = ADP + phosphate + H(+). It carries out the reaction Couples ATP hydrolysis with the unwinding of duplex DNA by translocating in the 3'-5' direction.. In terms of biological role, a probably bidirectional DNA helicase. This Methanocaldococcus jannaschii (strain ATCC 43067 / DSM 2661 / JAL-1 / JCM 10045 / NBRC 100440) (Methanococcus jannaschii) protein is Probable helicase MJ1565.